A 431-amino-acid polypeptide reads, in one-letter code: MATATSGSGLHLEAIDRIGSIPLVESSVKRVETIYDKVKNNNRLFSWYFETAEATISAAYETIQPAVKLFEPSIQRLDNVMCKSLDILEQRIPLVYLPPEMMYWNTKEYMSDHLVRPVLKRADSVKQIGNAVLESPLTTYAAERIDGAFTVGDKFVDKYLVPIQTDQDQTDVKKLVSALNDNFSPIRQQLNRMFGHKSPQEDDNEAVPDERGAIKAIHHGQRFSRKLKRRLTQRTIAEARALKKQSKEAIHVLFYAAELIATDPKQAVQKAKELWVYLSADEPENQARPATLEQLIVLLTRESARRVVHLVNFSAHVAANIPRNLAHTTTEVAHHIIYINHRIITISRLDKVKTISKEEAESLFKRMLAFYGSLQGLTNAYLERVASFLSGRMEAEKVTGSDGGNSNHRSSRRRQDPNHYSATHNNINGVY.

Residues Lys-397 to Tyr-431 are disordered. Polar residues predominate over residues Asn-418–Tyr-431.

It belongs to the perilipin family.

Its subcellular location is the cytoplasm. The protein localises to the lipid droplet. In terms of biological role, required for normal deposition of neutral lipids in the oocyte. In Drosophila melanogaster (Fruit fly), this protein is Lipid storage droplets surface-binding protein 1.